The following is a 284-amino-acid chain: Bifunctional protein FolD 2 (284 aa).

NADP(+) is bound by residues G166–S168 and I232.

It belongs to the tetrahydrofolate dehydrogenase/cyclohydrolase family. Homodimer.

The catalysed reaction is (6R)-5,10-methylene-5,6,7,8-tetrahydrofolate + NADP(+) = (6R)-5,10-methenyltetrahydrofolate + NADPH. The enzyme catalyses (6R)-5,10-methenyltetrahydrofolate + H2O = (6R)-10-formyltetrahydrofolate + H(+). It functions in the pathway one-carbon metabolism; tetrahydrofolate interconversion. Functionally, catalyzes the oxidation of 5,10-methylenetetrahydrofolate to 5,10-methenyltetrahydrofolate and then the hydrolysis of 5,10-methenyltetrahydrofolate to 10-formyltetrahydrofolate. The chain is Bifunctional protein FolD 2 from Colwellia psychrerythraea (strain 34H / ATCC BAA-681) (Vibrio psychroerythus).